Here is a 1132-residue protein sequence, read N- to C-terminus: Tyrosine-protein kinase JAK2 (1132 aa).

The segment at 1 to 239 (MGMACLTMTE…RYRFRRFIQQ (239 aa)) is interaction with cytokine/interferon/growth hormone receptors. The 344-residue stretch at 37–380 (PVLQVYLYHS…GYYRLTADAH (344 aa)) folds into the FERM domain. Tyr-119 is modified (phosphotyrosine; by autocatalysis). Residues Tyr-372 and Tyr-373 each carry the phosphotyrosine modification. The region spanning 401 to 482 (HGPISMDFAI…NLKDLLNCYQ (82 aa)) is the SH2; atypical domain. The residue at position 523 (Ser-523) is a Phosphoserine. The Protein kinase 1 domain maps to 545–809 (LIFNESLGQG…AVIRDLNSLF (265 aa)). Tyr-570 and Tyr-813 each carry phosphotyrosine. In terms of domain architecture, Protein kinase 2 spans 849 to 1124 (LKFLQQLGKG…SFRDLSLRVD (276 aa)). Residue 855–863 (LGKGNFGSV) participates in ATP binding. Tyr-868 is modified (phosphotyrosine; by autocatalysis). An ATP-binding site is contributed by Lys-882. Tyr-966 and Tyr-972 each carry phosphotyrosine; by autocatalysis. Residue Asp-976 is the Proton acceptor of the active site. 2 positions are modified to phosphotyrosine; by autocatalysis: Tyr-1007 and Tyr-1008.

Belongs to the protein kinase superfamily. Tyr protein kinase family. JAK subfamily. In terms of assembly, interacts with IL23R, SKB1 and STAM2. Interacts with EPOR. Interacts with LYN. Interacts with SIRPA. Interacts with SH2B1. Interacts with TEC. Interacts with IFNGR2 (via intracellular domain). Interacts with LEPR (Isoform B). Interacts with HSP90AB1; promotes functional activation in a heat shock-dependent manner. Interacts with STRA6. Interacts with ASB2; the interaction targets JAK2 for Notch-induced proteasomal degradation. Interacts with MPL/TPOR. It depends on Mg(2+) as a cofactor. In terms of processing, autophosphorylated, leading to regulate its activity. Leptin promotes phosphorylation on tyrosine residues, including phosphorylation on Tyr-813. Autophosphorylation on Tyr-119 in response to EPO down-regulates its kinase activity. Autophosphorylation on Tyr-868, Tyr-966 and Tyr-972 in response to growth hormone (GH) are required for maximal kinase activity. Also phosphorylated by TEC. Phosphorylated on tyrosine residues in response to interferon gamma signaling. Phosphorylated on tyrosine residues in response to a signaling cascade that is activated by increased cellular retinol. Undergoes Notch-induced ubiquitination and subsequent proteasomal degradation which is mediated by ASB1 or ASB2, the substrate-recognition components of probable ECS E3 ubiquitin-protein ligase complexes. In terms of tissue distribution, ubiquitously expressed throughout most tissues.

It is found in the endomembrane system. The protein localises to the cytoplasm. The protein resides in the nucleus. It carries out the reaction L-tyrosyl-[protein] + ATP = O-phospho-L-tyrosyl-[protein] + ADP + H(+). Its activity is regulated as follows. Regulated by autophosphorylation, can both activate or decrease activity. Heme regulates its activity by enhancing the phosphorylation on Tyr-1007 and Tyr-1008. In terms of biological role, non-receptor tyrosine kinase involved in various processes such as cell growth, development, differentiation or histone modifications. Mediates essential signaling events in both innate and adaptive immunity. In the cytoplasm, plays a pivotal role in signal transduction via its association with type I receptors such as growth hormone (GHR), prolactin (PRLR), leptin (LEPR), erythropoietin (EPOR), thrombopoietin receptor (MPL/TPOR); or type II receptors including IFN-alpha, IFN-beta, IFN-gamma and multiple interleukins. Following ligand-binding to cell surface receptors, phosphorylates specific tyrosine residues on the cytoplasmic tails of the receptor, creating docking sites for STATs proteins. Subsequently, phosphorylates the STATs proteins once they are recruited to the receptor. Phosphorylated STATs then form homodimer or heterodimers and translocate to the nucleus to activate gene transcription. For example, cell stimulation with erythropoietin (EPO) during erythropoiesis leads to JAK2 autophosphorylation, activation, and its association with erythropoietin receptor (EPOR) that becomes phosphorylated in its cytoplasmic domain. Then, STAT5 (STAT5A or STAT5B) is recruited, phosphorylated and activated by JAK2. Once activated, dimerized STAT5 translocates into the nucleus and promotes the transcription of several essential genes involved in the modulation of erythropoiesis. Part of a signaling cascade that is activated by increased cellular retinol and that leads to the activation of STAT5 (STAT5A or STAT5B). In addition, JAK2 mediates angiotensin-2-induced ARHGEF1 phosphorylation. Plays a role in cell cycle by phosphorylating CDKN1B. Cooperates with TEC through reciprocal phosphorylation to mediate cytokine-driven activation of FOS transcription. In the nucleus, plays a key role in chromatin by specifically mediating phosphorylation of 'Tyr-41' of histone H3 (H3Y41ph), a specific tag that promotes exclusion of CBX5 (HP1 alpha) from chromatin. Up-regulates the potassium voltage-gated channel activity of KCNA3. This chain is Tyrosine-protein kinase JAK2, found in Mus musculus (Mouse).